The following is a 241-amino-acid chain: MMRRKIFLFGDSITEESFSDGGWGASLADLLRRKADMVLRGYSGYNTRWALKVVERVFPVAEEDGGDSPAAVTVFFGANDACLPERCSGFQHVPLHEYKQNLRSIVSFLKNRWPQTAIILITPPPIDEEARLRYPYIENTTGLPERTNEVAGLYAKACIAVAEECQISVTDLWSKMQQIPNWQTECLWDGLHLSRVGNKVVFEEVAKKLKEEGIGAEDLAVDLPLIEDVDPKDPLKSFDEF.

Catalysis depends on serine 12, which acts as the Nucleophile. Residues aspartate 189 and histidine 192 contribute to the active site.

The protein belongs to the 'GDSL' lipolytic enzyme family.

This chain is GDSL esterase/lipase At5g45920, found in Arabidopsis thaliana (Mouse-ear cress).